Here is a 316-residue protein sequence, read N- to C-terminus: Pantothenate kinase (316 aa).

An ATP-binding site is contributed by 95 to 102; it reads GSVAVGKS.

It belongs to the prokaryotic pantothenate kinase family.

The protein resides in the cytoplasm. The enzyme catalyses (R)-pantothenate + ATP = (R)-4'-phosphopantothenate + ADP + H(+). The protein operates within cofactor biosynthesis; coenzyme A biosynthesis; CoA from (R)-pantothenate: step 1/5. The chain is Pantothenate kinase from Shewanella piezotolerans (strain WP3 / JCM 13877).